Reading from the N-terminus, the 400-residue chain is MSSAPNIFLSAGEASGEHYGAALIPALRALYADARFFGLGGQRMQALGMERIVRAEDVAVMGITEVVRHLPRIYGEYLKLKRSIIERKPDLAILIDFPDVNLSLARTLHEQGTPVLYFVSPQLWAWKKYRIRKVQRYVDRMLVIFPFEEAFYQGHGVQADFVGHPLTEVPLPTITRAEFAAAHHLDPAKHWVGLLPGSRGKEIRLNLPEMIAAAKQLGHEHEYVLPLAPTLTEAQRGHVRQMLAALTASAHDAAHDQAPRITVVADARATLHHARASIVASGTATVEAALIGNPFVVVYRVSPLSYAIARRVVTVPHVAMANLIADRRVVPELIQDDFTAANIVREMQPLVASDRAREQMMTGLAEVRAKLSTPGSSAIARVTKVAHEMLQRRAALSRVR.

This sequence belongs to the LpxB family.

It carries out the reaction a lipid X + a UDP-2-N,3-O-bis[(3R)-3-hydroxyacyl]-alpha-D-glucosamine = a lipid A disaccharide + UDP + H(+). It participates in bacterial outer membrane biogenesis; LPS lipid A biosynthesis. Its function is as follows. Condensation of UDP-2,3-diacylglucosamine and 2,3-diacylglucosamine-1-phosphate to form lipid A disaccharide, a precursor of lipid A, a phosphorylated glycolipid that anchors the lipopolysaccharide to the outer membrane of the cell. In Acidobacterium capsulatum (strain ATCC 51196 / DSM 11244 / BCRC 80197 / JCM 7670 / NBRC 15755 / NCIMB 13165 / 161), this protein is Lipid-A-disaccharide synthase.